Reading from the N-terminus, the 177-residue chain is Large ribosomal subunit protein uL6 (177 aa).

This sequence belongs to the universal ribosomal protein uL6 family. As to quaternary structure, part of the 50S ribosomal subunit.

Its function is as follows. This protein binds to the 23S rRNA, and is important in its secondary structure. It is located near the subunit interface in the base of the L7/L12 stalk, and near the tRNA binding site of the peptidyltransferase center. The chain is Large ribosomal subunit protein uL6 from Nitrosospira multiformis (strain ATCC 25196 / NCIMB 11849 / C 71).